A 297-amino-acid chain; its full sequence is Homoserine kinase (297 aa).

An ATP-binding site is contributed by 82-92 (PLTRGLGSSAS).

It belongs to the GHMP kinase family. Homoserine kinase subfamily.

The protein resides in the cytoplasm. The catalysed reaction is L-homoserine + ATP = O-phospho-L-homoserine + ADP + H(+). The protein operates within amino-acid biosynthesis; L-threonine biosynthesis; L-threonine from L-aspartate: step 4/5. In terms of biological role, catalyzes the ATP-dependent phosphorylation of L-homoserine to L-homoserine phosphate. In Bacillus cereus (strain ZK / E33L), this protein is Homoserine kinase.